The chain runs to 496 residues: Protein RepS (496 aa).

Residues 120–141 mediate DNA binding; that stretch reads SDILTTAIDLGFMPTLIIKSDK.

Its function is as follows. Essential for replication. The sequence is that of Protein RepS (repS) from Streptococcus pyogenes.